We begin with the raw amino-acid sequence, 268 residues long: Ribosomal RNA small subunit methyltransferase A (268 aa).

Residues asparagine 18, leucine 20, glycine 45, glutamate 66, aspartate 91, and asparagine 112 each coordinate S-adenosyl-L-methionine.

It belongs to the class I-like SAM-binding methyltransferase superfamily. rRNA adenine N(6)-methyltransferase family. RsmA subfamily.

The protein resides in the cytoplasm. It carries out the reaction adenosine(1518)/adenosine(1519) in 16S rRNA + 4 S-adenosyl-L-methionine = N(6)-dimethyladenosine(1518)/N(6)-dimethyladenosine(1519) in 16S rRNA + 4 S-adenosyl-L-homocysteine + 4 H(+). Its function is as follows. Specifically dimethylates two adjacent adenosines (A1518 and A1519) in the loop of a conserved hairpin near the 3'-end of 16S rRNA in the 30S particle. May play a critical role in biogenesis of 30S subunits. This is Ribosomal RNA small subunit methyltransferase A from Shewanella putrefaciens (strain CN-32 / ATCC BAA-453).